The primary structure comprises 253 residues: Adapter protein MecA (253 aa).

Belongs to the MecA family. Homodimer.

In terms of biological role, enables the recognition and targeting of unfolded and aggregated proteins to the ClpC protease or to other proteins involved in proteolysis. The chain is Adapter protein MecA from Streptococcus pyogenes serotype M6 (strain ATCC BAA-946 / MGAS10394).